The following is a 349-amino-acid chain: Uroporphyrinogen decarboxylase (349 aa).

Substrate is bound by residues 23–27, D71, Y148, S203, and H317; that span reads RQAGR.

Belongs to the uroporphyrinogen decarboxylase family. Homodimer.

Its subcellular location is the cytoplasm. The catalysed reaction is uroporphyrinogen III + 4 H(+) = coproporphyrinogen III + 4 CO2. It functions in the pathway porphyrin-containing compound metabolism; protoporphyrin-IX biosynthesis; coproporphyrinogen-III from 5-aminolevulinate: step 4/4. Functionally, catalyzes the decarboxylation of four acetate groups of uroporphyrinogen-III to yield coproporphyrinogen-III. This Sorangium cellulosum (strain So ce56) (Polyangium cellulosum (strain So ce56)) protein is Uroporphyrinogen decarboxylase.